The chain runs to 161 residues: Troponin C, slow skeletal and cardiac muscles (161 aa).

N-acetylmethionine is present on Met-1. EF-hand domains follow at residues 16–51, 52–87, 92–127, and 128–161; these read QKNE…LGQN, PTPE…CMKD, KTEE…TGET, and ITED…KGVE. Ca(2+)-binding residues include Asp-65, Asp-67, Ser-69, Thr-71, Asp-105, Asn-107, Asp-109, Tyr-111, Glu-116, Asn-143, Asp-145, Arg-147, and Glu-152.

It belongs to the troponin C family.

Functionally, troponin is the central regulatory protein of striated muscle contraction. Tn consists of three components: Tn-I which is the inhibitor of actomyosin ATPase, Tn-T which contains the binding site for tropomyosin and Tn-C. The binding of calcium to Tn-C abolishes the inhibitory action of Tn on actin filaments. This Coturnix japonica (Japanese quail) protein is Troponin C, slow skeletal and cardiac muscles (TNNC1).